The chain runs to 436 residues: Mitochondrial substrate carrier family protein Y (436 aa).

Residues 1-102 (MENNNKNINT…NINNNNINKK (102 aa)) form a disordered region. At 1–137 (MENNNKNINT…GGFLAGLSRN (137 aa)) the chain is on the mitochondrial intermembrane side. Solcar repeat units lie at residues 135 to 226 (SRNV…TLKY) and 236 to 334 (HDTL…LKKQ). The chain crosses the membrane as a helical span at residues 138-158 (VTRIIGSFSSGMAEESAGYPL). Over 159–194 (DLIKTRIQLSQSGVSGGGGTNTSIIKIFKDVIKTEG) the chain is Mitochondrial matrix. Residues 195-215 (VIGLFKGLSSPLILSALVTAI) traverse the membrane as a helical segment. Over 216–238 (QFGLFEDTLKYFRKHQYFKNHDT) the chain is Mitochondrial intermembrane. A helical transmembrane segment spans residues 239–259 (LSLLFSGSIAGFAQSFITCPV). The Mitochondrial matrix segment spans residues 260 to 313 (DLVKIQMQIQGIPSSQPNSNNNNNNNKAKGNSYFTKLIYREKGLLGFYQGLSPT). A helical membrane pass occupies residues 314–334 (LFRDVPGLAIFFTTYETLKKQ). Residues 335 to 347 (FGQPELSTQSPTE) are Mitochondrial intermembrane-facing. Residues 348–368 (FIKSFIPIVLSGGSAGVFYHG) traverse the membrane as a helical segment. A Solcar 3 repeat occupies 350–436 (KSFIPIVLSG…FLVYEMVINL (87 aa)). The Mitochondrial matrix portion of the chain corresponds to 369 to 413 (LTHPFDIAKTLIQSDRSATKYKGTFDCLKQVYQNQGPKSLFKGFS). Residues 414 to 434 (AVAIKSFQSNAVGFLVYEMVI) traverse the membrane as a helical segment. Residues 435 to 436 (NL) are Mitochondrial intermembrane-facing.

Belongs to the mitochondrial carrier (TC 2.A.29) family.

The protein localises to the mitochondrion inner membrane. In terms of biological role, mitochondrial solute carriers shuttle metabolites, nucleotides, and cofactors through the mitochondrial inner membrane. In Dictyostelium discoideum (Social amoeba), this protein is Mitochondrial substrate carrier family protein Y (mcfY).